We begin with the raw amino-acid sequence, 42 residues long: Omega-theraphotoxin-Asp3a (42 aa).

Cystine bridges form between cysteine 1-cysteine 16, cysteine 8-cysteine 21, and cysteine 15-cysteine 30.

The protein belongs to the neurotoxin 14 (magi-1) family. 08 (Ltx-4) subfamily. Expressed by the venom gland.

Its subcellular location is the secreted. Functionally, inhibits voltage-gated calcium channels (Cav) in rat cerebellar granule cells. The chain is Omega-theraphotoxin-Asp3a from Aphonopelma sp. (American tarantula).